A 301-amino-acid polypeptide reads, in one-letter code: Diaminopimelate epimerase (301 aa).

Residues Asn15, Gln47, and Asn67 each contribute to the substrate site. Cys76 acts as the Proton donor in catalysis. Residues 77–78 (GN), Asn163, Asn197, and 215–216 (ER) each bind substrate. Cys224 serves as the catalytic Proton acceptor. A substrate-binding site is contributed by 225–226 (GS). Residues 280–301 (SGSLDPSTGLWSRDGTQEAGAR) form a disordered region.

This sequence belongs to the diaminopimelate epimerase family. Homodimer.

It localises to the cytoplasm. It catalyses the reaction (2S,6S)-2,6-diaminopimelate = meso-2,6-diaminopimelate. It functions in the pathway amino-acid biosynthesis; L-lysine biosynthesis via DAP pathway; DL-2,6-diaminopimelate from LL-2,6-diaminopimelate: step 1/1. Catalyzes the stereoinversion of LL-2,6-diaminopimelate (L,L-DAP) to meso-diaminopimelate (meso-DAP), a precursor of L-lysine and an essential component of the bacterial peptidoglycan. In Rhizobium leguminosarum bv. trifolii (strain WSM2304), this protein is Diaminopimelate epimerase.